The chain runs to 1015 residues: DNA polymerase catalytic subunit (1015 aa).

The protein belongs to the DNA polymerase type-B family. In terms of assembly, forms a complex with the ssDNA-binding protein BALF2, the DNA polymerase processivity factor BMRF1, and the alkaline exonuclease BGLF5. Interacts with the putative helicase-primase complex composed of BBLF4, BSLF1 and BBLF2/3 proteins; these interactions may coordinate leading and lagging strand DNA synthesis at the replication fork.

The protein localises to the host nucleus. It catalyses the reaction DNA(n) + a 2'-deoxyribonucleoside 5'-triphosphate = DNA(n+1) + diphosphate. Functionally, replicates viral genomic DNA in the late phase of lytic infection, producing long concatemeric DNA. The replication complex is composed of six viral proteins: the DNA polymerase, processivity factor, primase, primase-associated factor, helicase, and ssDNA-binding protein. The polypeptide is DNA polymerase catalytic subunit (Epstein-Barr virus (strain B95-8) (HHV-4)).